The primary structure comprises 518 residues: Chromosomal replication initiator protein DnaA (518 aa).

The domain I, interacts with DnaA modulators stretch occupies residues 1–72; it reads MNEFWQHCSA…DLARDFWHSP (72 aa). Residues 72–181 are domain II; sequence PVDVQFVLDP…GESDSTYERS (110 aa). The interval 155-178 is disordered; the sequence is AAARRTWRPGAAAQAAGGESDSTY. A domain III, AAA+ region region spans residues 182–398; sequence KLNPVLTFDN…GALRKILAYS (217 aa). Residues Gly-226, Gly-228, Lys-229, and Thr-230 each contribute to the ATP site. The tract at residues 399-518 is domain IV, binds dsDNA; the sequence is KFHGREITIE…LHVLEQTLKG (120 aa).

The protein belongs to the DnaA family. In terms of assembly, oligomerizes as a right-handed, spiral filament on DNA at oriC.

Its subcellular location is the cytoplasm. Plays an essential role in the initiation and regulation of chromosomal replication. ATP-DnaA binds to the origin of replication (oriC) to initiate formation of the DNA replication initiation complex once per cell cycle. Binds the DnaA box (a 9 base pair repeat at the origin) and separates the double-stranded (ds)DNA. Forms a right-handed helical filament on oriC DNA; dsDNA binds to the exterior of the filament while single-stranded (ss)DNA is stabiized in the filament's interior. The ATP-DnaA-oriC complex binds and stabilizes one strand of the AT-rich DNA unwinding element (DUE), permitting loading of DNA polymerase. After initiation quickly degrades to an ADP-DnaA complex that is not apt for DNA replication. Binds acidic phospholipids. This chain is Chromosomal replication initiator protein DnaA, found in Paraburkholderia phymatum (strain DSM 17167 / CIP 108236 / LMG 21445 / STM815) (Burkholderia phymatum).